The primary structure comprises 440 residues: MAMLPQEIIRKKRDGDRLDPAEIAGFIAGVTDGSVSEGQAAAFAMAVWFSGMNRDECVALTLAMRDSGETLDWSDLARPIVDKHSTGGVGDNVSLMLAPIVAACGAAVPMISGRGLGHTGGTLDKLESIPGYDIQPSPELFRRVADEVGCAIIGQTADLAPADKRLYAIRDVTATVDSVPLITASILSKKLAAGLRSLVLDVKLGNGSFMTDPAETEVLARSLVEVANGAGVRTSALITDMNEPLADAAGNALEIENCLAYLRGEKAGTRLDQVVMALAAEMLVAAGIAAHEAEAEAMARRVLGSGEAMERFGLMVHRLGGPADFVDRPGAYLAKAPAILAVPAGRHGYLTSCKTRELGMAVIELGGGRIRPDDRIDHRVGLTGLRPLGTKVEKGEPIAFVHAADQSQAEAIAKRVVTLYAIADEEPARRPVIVSKLRAG.

Belongs to the thymidine/pyrimidine-nucleoside phosphorylase family. In terms of assembly, homodimer.

It catalyses the reaction thymidine + phosphate = 2-deoxy-alpha-D-ribose 1-phosphate + thymine. It participates in pyrimidine metabolism; dTMP biosynthesis via salvage pathway; dTMP from thymine: step 1/2. In terms of biological role, the enzymes which catalyze the reversible phosphorolysis of pyrimidine nucleosides are involved in the degradation of these compounds and in their utilization as carbon and energy sources, or in the rescue of pyrimidine bases for nucleotide synthesis. The polypeptide is Thymidine phosphorylase (Rhizobium meliloti (strain 1021) (Ensifer meliloti)).